A 411-amino-acid polypeptide reads, in one-letter code: Serine hydroxymethyltransferase (411 aa).

(6S)-5,6,7,8-tetrahydrofolate is bound at residue 120 to 122 (GHL). Position 225 is an N6-(pyridoxal phosphate)lysine (Lys225). Position 350–352 (350–352 (SPF)) interacts with (6S)-5,6,7,8-tetrahydrofolate.

The protein belongs to the SHMT family. As to quaternary structure, homodimer. Requires pyridoxal 5'-phosphate as cofactor.

It is found in the cytoplasm. The enzyme catalyses (6R)-5,10-methylene-5,6,7,8-tetrahydrofolate + glycine + H2O = (6S)-5,6,7,8-tetrahydrofolate + L-serine. Its pathway is one-carbon metabolism; tetrahydrofolate interconversion. It functions in the pathway amino-acid biosynthesis; glycine biosynthesis; glycine from L-serine: step 1/1. Functionally, catalyzes the reversible interconversion of serine and glycine with tetrahydrofolate (THF) serving as the one-carbon carrier. This reaction serves as the major source of one-carbon groups required for the biosynthesis of purines, thymidylate, methionine, and other important biomolecules. Also exhibits THF-independent aldolase activity toward beta-hydroxyamino acids, producing glycine and aldehydes, via a retro-aldol mechanism. This chain is Serine hydroxymethyltransferase, found in Lactobacillus johnsonii (strain CNCM I-12250 / La1 / NCC 533).